A 77-amino-acid chain; its full sequence is Large ribosomal subunit protein bL28 (77 aa).

Residues 1 to 25 (MARVCQVTGKAPMSGNNVSHANNKT) form a disordered region.

This sequence belongs to the bacterial ribosomal protein bL28 family.

The chain is Large ribosomal subunit protein bL28 from Paraburkholderia xenovorans (strain LB400).